The following is a 477-amino-acid chain: Glycogen synthase (477 aa).

Residue Lys-15 participates in ADP-alpha-D-glucose binding.

The protein belongs to the glycosyltransferase 1 family. Bacterial/plant glycogen synthase subfamily.

The catalysed reaction is [(1-&gt;4)-alpha-D-glucosyl](n) + ADP-alpha-D-glucose = [(1-&gt;4)-alpha-D-glucosyl](n+1) + ADP + H(+). The protein operates within glycan biosynthesis; glycogen biosynthesis. Synthesizes alpha-1,4-glucan chains using ADP-glucose. This chain is Glycogen synthase, found in Klebsiella pneumoniae subsp. pneumoniae (strain ATCC 700721 / MGH 78578).